The primary structure comprises 252 residues: Phosphate import ATP-binding protein PstB (252 aa).

The ABC transporter domain occupies 6–247 (IDTRDVNFWY…PEKEATQNYI (242 aa)). 38 to 45 (GPSGCGKS) contributes to the ATP binding site.

Belongs to the ABC transporter superfamily. Phosphate importer (TC 3.A.1.7) family. The complex is composed of two ATP-binding proteins (PstB), two transmembrane proteins (PstC and PstA) and a solute-binding protein (PstS).

The protein localises to the cell inner membrane. It carries out the reaction phosphate(out) + ATP + H2O = ADP + 2 phosphate(in) + H(+). In terms of biological role, part of the ABC transporter complex PstSACB involved in phosphate import. Responsible for energy coupling to the transport system. The polypeptide is Phosphate import ATP-binding protein PstB (Bacteroides thetaiotaomicron (strain ATCC 29148 / DSM 2079 / JCM 5827 / CCUG 10774 / NCTC 10582 / VPI-5482 / E50)).